The chain runs to 907 residues: Potassium channel AKT3 (907 aa).

Residues 1 to 75 (MPTTKCAVPL…YDRRYELWNN (75 aa)) lie on the Cytoplasmic side of the membrane. The chain crosses the membrane as a helical span at residues 76–96 (YLILLVVYSAWVTPFEFGFVP). Over 97 to 102 (EPAGAL) the chain is Extracellular. A helical transmembrane segment spans residues 103–123 (AAADNAVNAFFAVDIVLTFFV). At 124–146 (AYTDPKTFLLQDDPRKIALRYIT) the chain is on the cytoplasmic side. The helical transmembrane segment at 147 to 167 (TWFVLDVVATIPTELARRILP) threads the bilayer. The Extracellular portion of the chain corresponds to 168–174 (PDLRSYG). Residues 175–195 (FFGILRLWRLHRVGILFARLE) traverse the membrane as a helical; Voltage-sensor segment. Residues 196 to 209 (KDRKFSYFWVRCVK) are Cytoplasmic-facing. The chain crosses the membrane as a helical span at residues 210 to 230 (LVCVTLFAVHCSACFYYLLAD). The Extracellular segment spans residues 231–257 (RYPDPTNTWISAYMPNFHKASIWSRYV). The segment at residues 258 to 277 (ASMYWSITTLSTVGYGDMHA) is an intramembrane region (pore-forming). Residues 278-288 (ENTGEMVFTTT) are Extracellular-facing. The chain crosses the membrane as a helical span at residues 289–309 (YMLFNLGLTAYIIGNMTNLVV). The Cytoplasmic portion of the chain corresponds to 310–907 (HGTSRTRKFR…VPPENRSRNQ (598 aa)). 388-512 (LFEGVSNDLI…TIVMNNLIQY (125 aa)) serves as a coordination point for a nucleoside 3',5'-cyclic phosphate. ANK repeat units follow at residues 539–568 (DFPI…DPNE), 572–601 (YGRT…DSNS), 605–634 (EGRV…DLSG), 636–665 (DAAP…DVSG), and 670–699 (DGTT…DADA). Disordered stretches follow at residues 726–779 (ATRH…TPQR) and 801–824 (GGYR…SSPP). A compositionally biased stretch (low complexity) spans 754–776 (SSPSSSSRRGRTSSTSAASARST). A compositionally biased stretch (gly residues) spans 803–812 (YRGGGGGGGA). Positions 827–907 (RVAISCPESR…VPPENRSRNQ (81 aa)) constitute a KHA domain.

Belongs to the potassium channel family. Plant (TC 1.A.1.4) subfamily.

Its subcellular location is the membrane. Its function is as follows. Probable inward-rectifying potassium channel. Assuming opened or closed conformations in response to the voltage difference across the membrane, the channel is activated by hyperpolarization. This is Potassium channel AKT3 from Oryza sativa subsp. japonica (Rice).